A 109-amino-acid chain; its full sequence is Spermidine export protein MdtI (109 aa).

At 1–5 the chain is on the periplasmic side; it reads MAQFE. The helical transmembrane segment at 6–26 threads the bilayer; it reads WVHAAWLALAIVLEIVANVFL. Over 27-35 the chain is Cytoplasmic; that stretch reads KFSDGFRRK. The chain crosses the membrane as a helical span at residues 36-56; sequence IFGLLSLAAVLAAFSALSQAV. At 57-63 the chain is on the periplasmic side; sequence KGIDLSV. A helical membrane pass occupies residues 64 to 84; the sequence is VYALWGGFGIAATLAAGWILF. The Cytoplasmic segment spans residues 85-87; it reads GQR. The helical transmembrane segment at 88 to 108 threads the bilayer; sequence LNRKGWIGLVLLLAGMIMVKL. Position 109 (alanine 109) is a topological domain, periplasmic.

This sequence belongs to the drug/metabolite transporter (DMT) superfamily. Small multidrug resistance (SMR) (TC 2.A.7.1) family. MdtI subfamily. As to quaternary structure, forms a complex with MdtJ.

It is found in the cell inner membrane. Catalyzes the excretion of spermidine. The sequence is that of Spermidine export protein MdtI (mdtI) from Shigella flexneri.